A 226-amino-acid polypeptide reads, in one-letter code: Prolactin (226 aa).

The signal sequence occupies residues 1–29; sequence MNSQGSAQKAGTLLLLLISNLLFCQNVQP. Cysteine 33 and cysteine 38 are oxidised to a cystine. Phosphoserine is present on residues serine 53 and serine 117. Intrachain disulfides connect cysteine 85–cysteine 201 and cysteine 218–cysteine 226.

The protein belongs to the somatotropin/prolactin family. Interacts with PRLR.

The protein localises to the secreted. Its function is as follows. Prolactin acts primarily on the mammary gland by promoting lactation. This Mus musculus (Mouse) protein is Prolactin (Prl).